The sequence spans 400 residues: Phosphoglycerate kinase (400 aa).

Substrate-binding positions include 20-22, Arg35, 58-61, Arg115, and Arg155; these read DLN and HQGR. ATP contacts are provided by residues Glu330 and 356–359; that span reads GGDT.

It belongs to the phosphoglycerate kinase family. As to quaternary structure, monomer.

The protein resides in the cytoplasm. The enzyme catalyses (2R)-3-phosphoglycerate + ATP = (2R)-3-phospho-glyceroyl phosphate + ADP. Its pathway is carbohydrate degradation; glycolysis; pyruvate from D-glyceraldehyde 3-phosphate: step 2/5. In Haloarcula marismortui (strain ATCC 43049 / DSM 3752 / JCM 8966 / VKM B-1809) (Halobacterium marismortui), this protein is Phosphoglycerate kinase.